Here is a 38-residue protein sequence, read N- to C-terminus: Photosystem II reaction center protein L (38 aa).

The chain crosses the membrane as a helical span at residues 17–37 (SLYWGLLLIFVLAVLFSNYFF).

Belongs to the PsbL family. In terms of assembly, PSII is composed of 1 copy each of membrane proteins PsbA, PsbB, PsbC, PsbD, PsbE, PsbF, PsbH, PsbI, PsbJ, PsbK, PsbL, PsbM, PsbT, PsbX, PsbY, PsbZ, Psb30/Ycf12, at least 3 peripheral proteins of the oxygen-evolving complex and a large number of cofactors. It forms dimeric complexes.

It localises to the plastid. The protein resides in the chloroplast thylakoid membrane. In terms of biological role, one of the components of the core complex of photosystem II (PSII). PSII is a light-driven water:plastoquinone oxidoreductase that uses light energy to abstract electrons from H(2)O, generating O(2) and a proton gradient subsequently used for ATP formation. It consists of a core antenna complex that captures photons, and an electron transfer chain that converts photonic excitation into a charge separation. This subunit is found at the monomer-monomer interface and is required for correct PSII assembly and/or dimerization. The protein is Photosystem II reaction center protein L of Oenothera argillicola (Appalachian evening primrose).